A 297-amino-acid chain; its full sequence is MDLVRQLNDRLLFAVPKKGRLYEKSVALLNGADILFHRSHRLDIALSTSTPVALIFLPAADIPTFVGEGRCDLGITGVDQVRESGVNVELLQDLDFGRCQLQVQVPAGGPYSQPEQLIGKTIVTSFTRLAREYFARLEGVDEAAMTTRVKYVGGSVEAACALGVADAIVDLVESGETMRAAGLTPIGTVLSTSAHLICSPNPKSSLALLDTVRARIEGVLAAQHYVYCTYNAHADALPALLRITPGRRAPTISKLDDDNWYAVSSMIIRREKGRILDDLKASGAEDIMVFEISNCRV.

Belongs to the ATP phosphoribosyltransferase family.

Its subcellular location is the cytoplasm. It carries out the reaction 1-(5-phospho-beta-D-ribosyl)-ATP + diphosphate = 5-phospho-alpha-D-ribose 1-diphosphate + ATP. The protein operates within amino-acid biosynthesis; L-histidine biosynthesis; L-histidine from 5-phospho-alpha-D-ribose 1-diphosphate: step 1/9. Its function is as follows. Catalyzes the condensation of ATP and 5-phosphoribose 1-diphosphate to form N'-(5'-phosphoribosyl)-ATP (PR-ATP). Has a crucial role in the pathway because the rate of histidine biosynthesis seems to be controlled primarily by regulation of the enzymatic activity. The polypeptide is ATP phosphoribosyltransferase (HIS1) (Eremothecium gossypii (strain ATCC 10895 / CBS 109.51 / FGSC 9923 / NRRL Y-1056) (Yeast)).